Reading from the N-terminus, the 304-residue chain is Mycothiol acetyltransferase (304 aa).

N-acetyltransferase domains lie at 16-155 and 164-304; these read AHVE…RTGL and VALS…YRRA. Residue Glu46 coordinates 1D-myo-inositol 2-(L-cysteinylamino)-2-deoxy-alpha-D-glucopyranoside. Acetyl-CoA is bound at residue 87 to 89; sequence LVV. Glu190, Lys230, and Glu237 together coordinate 1D-myo-inositol 2-(L-cysteinylamino)-2-deoxy-alpha-D-glucopyranoside. Residues 241–243 and 248–254 each bind acetyl-CoA; these read LGV and AARGLGS. Residue Tyr275 coordinates 1D-myo-inositol 2-(L-cysteinylamino)-2-deoxy-alpha-D-glucopyranoside.

It belongs to the acetyltransferase family. MshD subfamily. In terms of assembly, monomer.

The enzyme catalyses 1D-myo-inositol 2-(L-cysteinylamino)-2-deoxy-alpha-D-glucopyranoside + acetyl-CoA = mycothiol + CoA + H(+). Catalyzes the transfer of acetyl from acetyl-CoA to desacetylmycothiol (Cys-GlcN-Ins) to form mycothiol. The chain is Mycothiol acetyltransferase from Clavibacter sepedonicus (Clavibacter michiganensis subsp. sepedonicus).